Here is a 400-residue protein sequence, read N- to C-terminus: Diphosphomevalonate decarboxylase (400 aa).

A2 bears the N-acetylalanine mark. (R)-5-diphosphomevalonate is bound by residues Y23–K26 and R78. The residue at position 96 (S96) is a Phosphoserine. (R)-5-diphosphomevalonate contacts are provided by residues S156–R161 and T212.

Belongs to the diphosphomevalonate decarboxylase family. As to quaternary structure, homodimer. Expressed in heart, skeletal muscle, lung, liver, brain, pancreas, kidney and placenta.

The protein resides in the cytoplasm. The catalysed reaction is (R)-5-diphosphomevalonate + ATP = isopentenyl diphosphate + ADP + phosphate + CO2. It functions in the pathway steroid biosynthesis; cholesterol biosynthesis. In terms of biological role, catalyzes the ATP dependent decarboxylation of (R)-5-diphosphomevalonate to form isopentenyl diphosphate (IPP). Functions in the mevalonate (MVA) pathway leading to isopentenyl diphosphate (IPP), a key precursor for the biosynthesis of isoprenoids and sterol synthesis. The sequence is that of Diphosphomevalonate decarboxylase (MVD) from Homo sapiens (Human).